The following is a 165-amino-acid chain: V-type proton ATPase 16 kDa proteolipid subunit (165 aa).

Over 1-12 (MSTVFNGDETAP) the chain is Lumenal. Residues 13-33 (FFGFLGAAAALVFSCMGAAYG) traverse the membrane as a helical segment. Residues 34–55 (TAKSGVGVASMGVMRPELVMKS) lie on the Cytoplasmic side of the membrane. A helical transmembrane segment spans residues 56–76 (IVPVVMAGVLGIYGLIIAVII). Residues 77 to 95 (STGINPKAKSYYLFDGYAH) are Lumenal-facing. The chain crosses the membrane as a helical span at residues 96–117 (LSSGLACGLAGLSAGMAIGIVG). The Cytoplasmic segment spans residues 118 to 129 (DAGVRANAQQPK). Residues 130–155 (LFVGMILILIFAEALALYGLIVGIIL) traverse the membrane as a helical segment. The Lumenal portion of the chain corresponds to 156–165 (SSRAGQSRAD).

It belongs to the V-ATPase proteolipid subunit family. As to quaternary structure, V-ATPase is a heteromultimeric enzyme composed of a peripheral catalytic V1 complex (main components: subunits A, B, C, D, E, and F) attached to an integral membrane V0 proton pore complex (main component: the proteolipid protein; which is present as a hexamer that forms the proton-conducting pore).

It is found in the vacuole membrane. Its function is as follows. Proton-conducting pore forming subunit of the membrane integral V0 complex of vacuolar ATPase. V-ATPase is responsible for acidifying a variety of intracellular compartments in eukaryotic cells. This chain is V-type proton ATPase 16 kDa proteolipid subunit (VMAC1), found in Mesembryanthemum crystallinum (Common ice plant).